Consider the following 162-residue polypeptide: Phosphopantetheine adenylyltransferase (162 aa).

Serine 11 provides a ligand contact to substrate. ATP is bound by residues 11–12 and histidine 19; that span reads SF. Substrate-binding residues include lysine 43, valine 76, and arginine 90. Residues 91 to 93, glutamate 101, and 126 to 132 each bind ATP; these read GLR and HLYISSS.

This sequence belongs to the bacterial CoaD family. In terms of assembly, homohexamer. It depends on Mg(2+) as a cofactor.

Its subcellular location is the cytoplasm. It catalyses the reaction (R)-4'-phosphopantetheine + ATP + H(+) = 3'-dephospho-CoA + diphosphate. It participates in cofactor biosynthesis; coenzyme A biosynthesis; CoA from (R)-pantothenate: step 4/5. Reversibly transfers an adenylyl group from ATP to 4'-phosphopantetheine, yielding dephospho-CoA (dPCoA) and pyrophosphate. This is Phosphopantetheine adenylyltransferase from Streptococcus pneumoniae (strain CGSP14).